The following is a 232-amino-acid chain: Large ribosomal subunit protein uL1 (232 aa).

This sequence belongs to the universal ribosomal protein uL1 family. In terms of assembly, part of the 50S ribosomal subunit.

In terms of biological role, binds directly to 23S rRNA. The L1 stalk is quite mobile in the ribosome, and is involved in E site tRNA release. Protein L1 is also a translational repressor protein, it controls the translation of the L11 operon by binding to its mRNA. This is Large ribosomal subunit protein uL1 from Phocaeicola vulgatus (strain ATCC 8482 / DSM 1447 / JCM 5826 / CCUG 4940 / NBRC 14291 / NCTC 11154) (Bacteroides vulgatus).